The sequence spans 155 residues: Ciliary microtubule inner protein 2C (155 aa).

The protein belongs to the CIMIP2 family.

It localises to the cytoplasm. It is found in the cytoskeleton. The protein localises to the cilium axoneme. In terms of biological role, microtubule inner protein (MIP) part of the dynein-decorated doublet microtubules (DMTs) in cilia axoneme, which is required for motile cilia beating. The polypeptide is Ciliary microtubule inner protein 2C (cimip2ca) (Xenopus laevis (African clawed frog)).